The primary structure comprises 1402 residues: DNA-directed RNA polymerase subunit beta' (1402 aa).

Positions 71, 73, 86, and 89 each coordinate Zn(2+). Asp462, Asp464, and Asp466 together coordinate Mg(2+). Residues Cys811, Cys885, Cys892, and Cys895 each contribute to the Zn(2+) site. The segment at 1379 to 1402 (RKGTGAGSANQMLQDMTDQVPAAE) is disordered. Positions 1385 to 1395 (GSANQMLQDMT) are enriched in polar residues.

It belongs to the RNA polymerase beta' chain family. The RNAP catalytic core consists of 2 alpha, 1 beta, 1 beta' and 1 omega subunit. When a sigma factor is associated with the core the holoenzyme is formed, which can initiate transcription. It depends on Mg(2+) as a cofactor. The cofactor is Zn(2+).

The catalysed reaction is RNA(n) + a ribonucleoside 5'-triphosphate = RNA(n+1) + diphosphate. Its function is as follows. DNA-dependent RNA polymerase catalyzes the transcription of DNA into RNA using the four ribonucleoside triphosphates as substrates. The polypeptide is DNA-directed RNA polymerase subunit beta' (Agrobacterium fabrum (strain C58 / ATCC 33970) (Agrobacterium tumefaciens (strain C58))).